A 750-amino-acid chain; its full sequence is Ribosomal RNA large subunit methyltransferase K/L (750 aa).

The region spanning 46 to 157 (TAYRLCLWSR…RGEAILSLDL (112 aa)) is the THUMP domain.

This sequence belongs to the methyltransferase superfamily. RlmKL family.

The protein resides in the cytoplasm. It catalyses the reaction guanosine(2445) in 23S rRNA + S-adenosyl-L-methionine = N(2)-methylguanosine(2445) in 23S rRNA + S-adenosyl-L-homocysteine + H(+). It carries out the reaction guanosine(2069) in 23S rRNA + S-adenosyl-L-methionine = N(2)-methylguanosine(2069) in 23S rRNA + S-adenosyl-L-homocysteine + H(+). Its function is as follows. Specifically methylates the guanine in position 2445 (m2G2445) and the guanine in position 2069 (m7G2069) of 23S rRNA. The protein is Ribosomal RNA large subunit methyltransferase K/L of Pseudomonas syringae pv. tomato (strain ATCC BAA-871 / DC3000).